Consider the following 1402-residue polypeptide: Transcription elongation factor spt-6 (1402 aa).

The segment at 1 to 199 (MSNSMRDLID…PKDRGLNIDT (199 aa)) is disordered. Acidic residues-rich tracts occupy residues 10–28 (DGEAELDDEEDDESFDEEA), 40–52 (DSSEEEEDDEDEE), 62–75 (IVDEDEEDEAEDSD), and 90–102 (EEEEQLDEEDLDL). Residues 123–135 (HRDDHRPTERRGL) show a composition bias toward basic and acidic residues. Residues 161-176 (DEFDDFIEDDYPEDDE) show a composition bias toward acidic residues. Over residues 177-199 (ERRHREEDEEVARPKDRGLNIDT) the composition is skewed to basic and acidic residues. Residues 1094–1161 (GMIVAANVRV…KEFVSKLSMR (68 aa)) enclose the S1 motif domain. Residues 1209 to 1306 (PLFKPFNSTQ…KKVDELMQCD (98 aa)) enclose the SH2 domain.

It belongs to the SPT6 family.

It localises to the nucleus. The protein localises to the chromosome. Its function is as follows. Histone H3-H4 chaperone that plays a role in maintenance of chromatin structure during RNA polymerase II transcription elongation thereby repressing transcription initiation from cryptic promoters. Mediates the reassembly of nucleosomes onto the promoters of at least a selected set of genes during repression; the nucleosome reassembly is essential for transcriptional repression. Essential for viability. The chain is Transcription elongation factor spt-6 (spt-6) from Neurospora crassa (strain ATCC 24698 / 74-OR23-1A / CBS 708.71 / DSM 1257 / FGSC 987).